A 748-amino-acid polypeptide reads, in one-letter code: MPVSHSNGCVCGVSLYSAWAAGPDRARVLLALLCRMDDGGCDAKFALVNVCARGVTALARGARDVTAARLEDLARAAAAPRALPLATLGHAATWKALYVSALAACARRLGPFAFIERRALEETTDTGLLVSAEEPPDAADAAPRAAVLRSALRLAVEEDAVRAAAAAAPAGGGSLARARLCAMRDGHADLSAPGNVVEFELTTKTARFYRIFADIAQPPRKRAGRLADVFAHREYRVRTEGSAAPVVVRALVPVNFDCVVADARAFSPMAAMLVFAQWHAALFTDGPAQVLGFLGPQLNPGGEERDYCFLLGFPGVPLVVSAADAGAVRDDLDAHVLTDGLWPAFGVHVYHALGPWNFLDGAAVASLNRRIAAARAALPPGGSDGSDWPAGRVSTILNSPARARGSGWPRFDFSAFFPTLYAHLVPENARLARAICARRDGRPGLKPSLLTFFGGLRHVHAPAYEAVIALANAVAAAVERAANARNFAVCTYVKDGFWGAFGDAAPEVVPREAALAAALALRDDCQRAAEAVLRAAGLHPAEGAELHLRFEGLFTHAVSWSANKYWLWDATAGGAEGELFVGFPCRTEFGRMAKRSLAGLLRRAVAQPERPSDTVAAAAAACDALVHAAFERRGDVRFWSATAPIADWGAVPRSALSGGDLLDADHGPRPYVLVAGHEAAPFPLPWGSLPLPVLLPDIACRAHMAPVLQELARMLNGALAALAAREGDDEPPIEEFEYNLADFDFLFA.

Belongs to the herpesviridae HEPA family. As to quaternary structure, associates with the primase and the helicase to form the helicase-primase complex. Interacts with the origin-binding protein. Interacts with the polymerase catalytic subunit.

The protein resides in the host nucleus. Component of the helicase/primase complex. Unwinds the DNA at the replication forks and generates single-stranded DNA for both leading and lagging strand synthesis. The primase synthesizes short RNA primers on the lagging strand that the polymerase presumably elongates using dNTPs. The primase-associated factor has no known catalytic activity in the complex and may serve to facilitate the formation of the replisome by directly interacting with the origin-binding protein and the polymerase. This chain is DNA helicase/primase complex-associated protein (UL8), found in Bos taurus (Bovine).